The primary structure comprises 451 residues: Adenylyltransferase and sulfurtransferase MOCS3 (451 aa).

Thr60 is modified (phosphothreonine). Residues Gly99, Asp120, Ser127–Arg131, Lys144, and Asp188–Asn189 contribute to the ATP site. Positions 229 and 232 each coordinate Zn(2+). The active-site Glycyl thioester intermediate; for adenylyltransferase activity is Cys246. 2 residues coordinate Zn(2+): Cys304 and Cys307. A Rhodanese domain is found at Gln353–Pro449. Catalysis depends on Cys408, which acts as the Cysteine persulfide intermediate; for sulfurtransferase activity.

This sequence in the N-terminal section; belongs to the HesA/MoeB/ThiF family. UBA4 subfamily. The cofactor is Zn(2+).

The protein resides in the cytoplasm. The protein localises to the cytosol. The enzyme catalyses [molybdopterin-synthase sulfur-carrier protein]-C-terminal Gly-Gly + ATP + H(+) = [molybdopterin-synthase sulfur-carrier protein]-C-terminal Gly-Gly-AMP + diphosphate. It catalyses the reaction [molybdopterin-synthase sulfur-carrier protein]-C-terminal Gly-Gly-AMP + S-sulfanyl-L-cysteinyl-[cysteine desulfurase] + AH2 = [molybdopterin-synthase sulfur-carrier protein]-C-terminal-Gly-aminoethanethioate + L-cysteinyl-[cysteine desulfurase] + A + AMP + 2 H(+). The protein operates within tRNA modification; 5-methoxycarbonylmethyl-2-thiouridine-tRNA biosynthesis. Its pathway is cofactor biosynthesis; molybdopterin biosynthesis. Functionally, plays a central role in 2-thiolation of mcm(5)S(2)U at tRNA wobble positions of cytosolic tRNA(Lys), tRNA(Glu) and tRNA(Gln). Also essential during biosynthesis of the molybdenum cofactor. Acts by mediating the C-terminal thiocarboxylation of sulfur carriers URM1 and MOCS2A. Its N-terminus first activates URM1 and MOCS2A as acyl-adenylates (-COAMP), then the persulfide sulfur on the catalytic cysteine is transferred to URM1 and MOCS2A to form thiocarboxylation (-COSH) of their C-terminus. The reaction probably involves hydrogen sulfide that is generated from the persulfide intermediate and that acts as a nucleophile towards URM1 and MOCS2A. Subsequently, a transient disulfide bond is formed. Does not use thiosulfate as sulfur donor; NFS1 probably acting as a sulfur donor for thiocarboxylation reactions. The chain is Adenylyltransferase and sulfurtransferase MOCS3 from Drosophila ananassae (Fruit fly).